A 255-amino-acid chain; its full sequence is Anamorsin homolog (255 aa).

The interval 1–163 is N-terminal SAM-like domain; that stretch reads MPKETLVVSK…VRPNWKSKTD (163 aa). A linker region spans residues 164–185; that stretch reads KKSPSMIDAAPIDGYISKAPDY. Positions 188, 195, 198, and 200 each coordinate [2Fe-2S] cluster. The fe-S binding site A stretch occupies residues 188 to 200; sequence CSTKPRACANCTC. Residues Cys-224, Cys-227, Cys-235, and Cys-238 each contribute to the [4Fe-4S] cluster site. 2 short sequence motifs (cx2C motif) span residues 224-227 and 235-238; these read CGNC and CESC. The tract at residues 224–238 is fe-S binding site B; that stretch reads CGNCYLGDAFRCESC.

The protein belongs to the anamorsin family. Monomer. [2Fe-2S] cluster is required as a cofactor. Requires [4Fe-4S] cluster as cofactor.

The protein localises to the cytoplasm. It localises to the mitochondrion intermembrane space. Its function is as follows. Component of the cytosolic iron-sulfur (Fe-S) protein assembly (CIA) machinery. Required for the maturation of extramitochondrial Fe-S proteins. Part of an electron transfer chain functioning in an early step of cytosolic Fe-S biogenesis, facilitating the de novo assembly of a [4Fe-4S] cluster on the cytosolic Fe-S scaffold complex. Electrons are transferred from NADPH via a FAD- and FMN-containing diflavin oxidoreductase. Together with the diflavin oxidoreductase, also required for the assembly of the diferric tyrosyl radical cofactor of ribonucleotide reductase (RNR), probably by providing electrons for reduction during radical cofactor maturation in the catalytic small subunit. This Theileria annulata protein is Anamorsin homolog.